Here is a 271-residue protein sequence, read N- to C-terminus: Ribosomal RNA small subunit methyltransferase A (271 aa).

S-adenosyl-L-methionine contacts are provided by His11, Leu13, Gly38, Glu59, Asp84, and Asn109.

It belongs to the class I-like SAM-binding methyltransferase superfamily. rRNA adenine N(6)-methyltransferase family. RsmA subfamily.

The protein resides in the cytoplasm. The catalysed reaction is adenosine(1518)/adenosine(1519) in 16S rRNA + 4 S-adenosyl-L-methionine = N(6)-dimethyladenosine(1518)/N(6)-dimethyladenosine(1519) in 16S rRNA + 4 S-adenosyl-L-homocysteine + 4 H(+). Its function is as follows. Specifically dimethylates two adjacent adenosines (A1518 and A1519) in the loop of a conserved hairpin near the 3'-end of 16S rRNA in the 30S particle. May play a critical role in biogenesis of 30S subunits. This is Ribosomal RNA small subunit methyltransferase A from Nostoc sp. (strain PCC 7120 / SAG 25.82 / UTEX 2576).